The chain runs to 206 residues: Orotate phosphoribosyltransferase (206 aa).

5-phospho-alpha-D-ribose 1-diphosphate-binding positions include Arg114, Lys115, Lys118, His120, and 141–149 (EDVVTTGQS). Residues Thr145 and Arg173 each contribute to the orotate site.

This sequence belongs to the purine/pyrimidine phosphoribosyltransferase family. PyrE subfamily. As to quaternary structure, homodimer. Mg(2+) is required as a cofactor.

The enzyme catalyses orotidine 5'-phosphate + diphosphate = orotate + 5-phospho-alpha-D-ribose 1-diphosphate. Its pathway is pyrimidine metabolism; UMP biosynthesis via de novo pathway; UMP from orotate: step 1/2. Functionally, catalyzes the transfer of a ribosyl phosphate group from 5-phosphoribose 1-diphosphate to orotate, leading to the formation of orotidine monophosphate (OMP). The protein is Orotate phosphoribosyltransferase of Nostoc sp. (strain PCC 7120 / SAG 25.82 / UTEX 2576).